The sequence spans 175 residues: ATP synthase subunit b 2 (175 aa).

Residues 20–40 (LIFWTAVTFVIVLLILKKFAW) form a helical membrane-spanning segment.

This sequence belongs to the ATPase B chain family. In terms of assembly, F-type ATPases have 2 components, F(1) - the catalytic core - and F(0) - the membrane proton channel. F(1) has five subunits: alpha(3), beta(3), gamma(1), delta(1), epsilon(1). F(0) has four main subunits: a(1), b(2) and c(10-14). The alpha and beta chains form an alternating ring which encloses part of the gamma chain. F(1) is attached to F(0) by a central stalk formed by the gamma and epsilon chains, while a peripheral stalk is formed by the delta and b chains.

It is found in the cell inner membrane. F(1)F(0) ATP synthase produces ATP from ADP in the presence of a proton or sodium gradient. F-type ATPases consist of two structural domains, F(1) containing the extramembraneous catalytic core and F(0) containing the membrane proton channel, linked together by a central stalk and a peripheral stalk. During catalysis, ATP synthesis in the catalytic domain of F(1) is coupled via a rotary mechanism of the central stalk subunits to proton translocation. Functionally, component of the F(0) channel, it forms part of the peripheral stalk, linking F(1) to F(0). This chain is ATP synthase subunit b 2, found in Prosthecochloris aestuarii (strain DSM 271 / SK 413).